The sequence spans 233 residues: Fibrillarin-like rRNA/tRNA 2'-O-methyltransferase (233 aa).

S-adenosyl-L-methionine-binding positions include 89 to 90 (TT), 108 to 109 (EF), 133 to 134 (DA), and 153 to 156 (DIAQ).

The protein belongs to the methyltransferase superfamily. Fibrillarin family. Interacts with nop5. Component of box C/D small ribonucleoprotein (sRNP) particles that contain rpl7ae, FlpA and nop5, plus a guide RNA.

Functionally, involved in pre-rRNA and tRNA processing. Utilizes the methyl donor S-adenosyl-L-methionine to catalyze the site-specific 2'-hydroxyl methylation of ribose moieties in rRNA and tRNA. Site specificity is provided by a guide RNA that base pairs with the substrate. Methylation occurs at a characteristic distance from the sequence involved in base pairing with the guide RNA. The protein is Fibrillarin-like rRNA/tRNA 2'-O-methyltransferase of Sulfurisphaera tokodaii (strain DSM 16993 / JCM 10545 / NBRC 100140 / 7) (Sulfolobus tokodaii).